The following is a 343-amino-acid chain: Shematrin-like protein 3 (343 aa).

An N-terminal signal peptide occupies residues 1-16 (MLKLVCAVVLIATVNA).

Prismatic layer of shell (at protein level).

The protein localises to the secreted. The polypeptide is Shematrin-like protein 3 (Pinctada maxima (Silver-lipped pearl oyster)).